A 255-amino-acid polypeptide reads, in one-letter code: Thrombin-like enzyme batroxobin (255 aa).

Residues 1–18 (MVLIRVIANLLILQVSYA) form the signal peptide. Residues 19 to 24 (QKSSEL) constitute a propeptide that is removed on maturation. The Peptidase S1 domain occupies 25-247 (VIGGDECDIN…YLPWIQSIIA (223 aa)). Intrachain disulfides connect C31–C163, C50–C66, C98–C254, C142–C208, C174–C187, and C198–C223. Residues H65 and D110 each act as charge relay system in the active site. An N-linked (GlcNAc...) asparagine glycan is attached at N170. The active-site Charge relay system is the S202. N249 is a glycosylation site (N-linked (GlcNAc...) asparagine).

The protein belongs to the peptidase S1 family. Snake venom subfamily. In terms of assembly, monomer. In terms of tissue distribution, expressed by the venom gland.

It is found in the secreted. The catalysed reaction is Selective cleavage of Arg-|-Xaa bond in fibrinogen, to form fibrin, and release fibrinopeptide A. The specificity of further degradation of fibrinogen varies with species origin of the enzyme.. Thrombin-like snake venom serine protease. Cleaves Arg-Gly bonds in fibrinogen alpha chains (FGA). The protein is Thrombin-like enzyme batroxobin of Bothrops atrox (Barba amarilla).